We begin with the raw amino-acid sequence, 360 residues long: MRILGIETSCDETAASVVMRDEEGRGRILGDVVLSQLEEHSAYGGVVPEIAARAHVEALDTLIVEALLRAGVKLEDIDAIAATSGPGLIGGLIVGLMTGKAIARATGKPLYAVNHLEGHALTARLTDELQFPYLMLLVSGGHTQLILVKGVGEYERWGTTIDDALGEAFDKTAKLLGLPYPGGPAVERAARTGNPERFDFPRPLVGDARLDFSFSGLKTAVRQAAKSLEPVTEADIADICASFQRAISRTLRDRVGRSLKRFKAESASVAQPALVVAGGVAANQALRQTLQSLCDEHGFRFVAPPLSLCTDNAAMIAWAGAERLAAGLPADGLDVAPRSRWPLDAEAKALIGSGRRGAKA.

Fe cation contacts are provided by histidine 115 and histidine 119. Substrate-binding positions include 137-141 (LVSGG), aspartate 170, glycine 183, and asparagine 283. Aspartate 311 is a Fe cation binding site.

It belongs to the KAE1 / TsaD family. It depends on Fe(2+) as a cofactor.

The protein resides in the cytoplasm. The enzyme catalyses L-threonylcarbamoyladenylate + adenosine(37) in tRNA = N(6)-L-threonylcarbamoyladenosine(37) in tRNA + AMP + H(+). Functionally, required for the formation of a threonylcarbamoyl group on adenosine at position 37 (t(6)A37) in tRNAs that read codons beginning with adenine. Is involved in the transfer of the threonylcarbamoyl moiety of threonylcarbamoyl-AMP (TC-AMP) to the N6 group of A37, together with TsaE and TsaB. TsaD likely plays a direct catalytic role in this reaction. The protein is tRNA N6-adenosine threonylcarbamoyltransferase of Sinorhizobium medicae (strain WSM419) (Ensifer medicae).